The sequence spans 125 residues: CLAVATA3/ESR (CLE)-related protein ESR3 (125 aa).

The N-terminal stretch at 1–26 (MASRMGMVAIMSLFVYAIVVPTSVNA) is a signal peptide. The interval 45 to 125 (QQQGGFIGHR…IGPPPLPDRY (81 aa)) is disordered. Residues P75 and P78 each carry the hydroxyproline modification. A glycan (O-linked (Ara...) hydroxyproline) is linked at P78.

The protein belongs to the CLV3/ESR signal peptide family. In terms of processing, the O-glycosylation (arabinosylation) of the hydroxyproline Pro-78 enhances binding affinity of the ESR3p peptide for its receptor. As to expression, seed endosperm.

It localises to the secreted. The protein resides in the extracellular space. Its function is as follows. Extracellular signal peptide that regulates cell fate. This is CLAVATA3/ESR (CLE)-related protein ESR3 from Zea mays (Maize).